The following is a 566-amino-acid chain: MKKFNIKSLTLLIVLLPLIVNANNIDSHLLEQNDIAKYVAQSDTVGSFFERFSALLNYPIVVSKQAAKKRISGEFDLSNPEEMLEKLTLLVGLIWYKDGNALYIYDSGELISKVILLENISLNYLIQYLKDANLYDHRYPIRGNISDKTFYISGPPALVELVANTATLLDKQVSSIGTDKVNFGVIKLKNTFVSDRTYNMRGEDIVIPGVATVVERLLNNGKALSNRQAQNDPMPPFNITQKVSEDSNDFSFSSVTNSSILEDVSLIAYPETNSILVKGNDQQIQIIRDIITQLDVAKRHIELSLWIIDIDKSELNNLGVNWQGTASFGDSFGASFNMSSSASISTLDGNKFIASVMALNQKKKANVVSRPVILTQENIPAIFDNNRTFYVSLVGERNSSLEHVTYGTLINVIPRFSSRGQIEMSLTIEDGTGNSQSNYNYNNENTSVLPEVGRTKISTIARVPQGKSLLIGGYTHETNSNEIISIPFLSSIPVIGNVFKYKTSNISNIVRVFLIQPREIKESSYYNTAEYKSLISEREIQKTTQIIPSETTLLEDEKSLVSYLNY.

The N-terminal stretch at Met-1–Ala-22 is a signal peptide.

It belongs to the bacterial secretin family. T3SS SctC subfamily. The core secretion machinery of the T3SS is composed of approximately 20 different proteins, including cytoplasmic components, a base, an export apparatus and a needle. This subunit is part of the base, which anchors the injectisome in the bacterial cell envelope. Forms a stable homooligomeric complex. Interacts with the pilotin MxiM/SctG and the inner membrane ring outer protein MxiJ/SctJ.

The protein resides in the cell outer membrane. Component of the type III secretion system (T3SS), also called injectisome, which is used to inject bacterial effector proteins into eukaryotic host cells. Forms a ring-shaped multimeric structure with an apparent central pore in the outer membrane. Necessary for the secretion of Ipa invasins. This chain is Type 3 secretion system secretin, found in Shigella flexneri.